A 220-amino-acid chain; its full sequence is uncharacterized protein (220 aa).

The next 4 helical transmembrane spans lie at 61–81 (LISV…SFFG), 85–105 (SVMF…YGAF), 115–135 (FVII…ILLL), and 150–170 (LPLE…SLLL).

It localises to the membrane. This is an uncharacterized protein from Caenorhabditis elegans.